We begin with the raw amino-acid sequence, 260 residues long: Thiazole synthase (260 aa).

The active-site Schiff-base intermediate with DXP is Lys102. Residues Gly163, 189–190 (AG), and 211–212 (NT) each bind 1-deoxy-D-xylulose 5-phosphate.

It belongs to the ThiG family. As to quaternary structure, homotetramer. Forms heterodimers with either ThiH or ThiS.

Its subcellular location is the cytoplasm. The enzyme catalyses [ThiS sulfur-carrier protein]-C-terminal-Gly-aminoethanethioate + 2-iminoacetate + 1-deoxy-D-xylulose 5-phosphate = [ThiS sulfur-carrier protein]-C-terminal Gly-Gly + 2-[(2R,5Z)-2-carboxy-4-methylthiazol-5(2H)-ylidene]ethyl phosphate + 2 H2O + H(+). The protein operates within cofactor biosynthesis; thiamine diphosphate biosynthesis. Catalyzes the rearrangement of 1-deoxy-D-xylulose 5-phosphate (DXP) to produce the thiazole phosphate moiety of thiamine. Sulfur is provided by the thiocarboxylate moiety of the carrier protein ThiS. In vitro, sulfur can be provided by H(2)S. This is Thiazole synthase from Geobacter sp. (strain M21).